The following is a 477-amino-acid chain: Histone-lysine N-methyltransferase SUV39H2 (477 aa).

Residues 1–59 (MATARAKARGSEAGARCHRAPGPPPRPKARRTARRRRAETLTARRSRPSAGERRAGSQR) form a disordered region. Residues 27–37 (PKARRTARRRR) are compositionally biased toward basic residues. The Chromo domain maps to 118–176 (YEVEYLCDYKVAKGVEYYLVKWKGWPDSTNTWEPLRNLRCPQLLRQFSDDKKTYLAQER). One can recognise a Pre-SET domain in the interval 256–314 (FGCSCTDCFFDKCCPAEAGVVLAYNKKQQIKIQPGTPIYECNSRCRCGPECPNRIVQKG). The Zn(2+) site is built by Cys-258, Cys-260, Cys-263, Cys-268, Cys-269, Cys-296, Cys-300, Cys-302, and Cys-306. The 124-residue stretch at 317-440 (YSLCIFKTSN…AGEELTFDYQ (124 aa)) folds into the SET domain. S-adenosyl-L-methionine is bound by residues 328–330 (CGW), Tyr-371, and 397–398 (NH). Cys-400 contributes to the Zn(2+) binding site. Ser-448, Ser-451, and Ser-455 each carry phosphoserine. The region spanning 461-477 (VRTQCKCGAETCRGYLN) is the Post-SET domain. Cys-465, Cys-467, and Cys-472 together coordinate Zn(2+).

Belongs to the class V-like SAM-binding methyltransferase superfamily. Histone-lysine methyltransferase family. Suvar3-9 subfamily. As to quaternary structure, interacts with SMAD5. The large PER complex involved in the histone methylation is composed of at least PER2, CBX3, TRIM28, SUV39H1 and/or SUV39H2; CBX3 mediates the formation of the complex. Ubiquitinated by the DCX(DCAF13) E3 ubiquitin ligase complex, leading to its degradation. In terms of tissue distribution, testis specific; predominant expression in type B spermatogonia and preleptotene spermatocytes.

It localises to the nucleus. It is found in the chromosome. The protein resides in the centromere. It carries out the reaction L-lysyl(9)-[histone H3] + 3 S-adenosyl-L-methionine = N(6),N(6),N(6)-trimethyl-L-lysyl(9)-[histone H3] + 3 S-adenosyl-L-homocysteine + 3 H(+). Histone methyltransferase that specifically trimethylates 'Lys-9' of histone H3 using monomethylated H3 'Lys-9' as substrate. H3 'Lys-9' trimethylation represents a specific tag for epigenetic transcriptional repression by recruiting HP1 (CBX1, CBX3 and/or CBX5) proteins to methylated histones. Mainly functions in heterochromatin regions, thereby playing a central role in the establishment of constitutive heterochromatin at pericentric and telomere regions. H3 'Lys-9' trimethylation is also required to direct DNA methylation at pericentric repeats. SUV39H1 is targeted to histone H3 via its interaction with RB1 and is involved in many processes, such as cell cycle regulation, transcriptional repression and regulation of telomere length. May participate in regulation of higher-order chromatin organization during spermatogenesis. Recruited by the large PER complex to the E-box elements of the circadian target genes such as PER2 itself or PER1, contributes to the conversion of local chromatin to a heterochromatin-like repressive state through H3 'Lys-9' trimethylation. In Mus musculus (Mouse), this protein is Histone-lysine N-methyltransferase SUV39H2 (Suv39h2).